We begin with the raw amino-acid sequence, 145 residues long: Neutral phospholipase A2 homolog taipoxin beta chain 1 (145 aa).

The signal sequence occupies residues 1–27 (MHPAHLLVLLAVCVSLLGASDIPPLPL). 7 cysteine pairs are disulfide-bonded: C38–C98, C54–C144, C56–C72, C71–C125, C78–C118, C87–C111, and C105–C116.

The protein belongs to the phospholipase A2 family. Group I subfamily. D49 sub-subfamily. As to quaternary structure, heterotrimer of alpha, beta, and gamma chains; non-covalently linked. As to expression, expressed by the venom gland.

Its subcellular location is the secreted. Functionally, heterotrimer: Snake venom phospholipase A2 (PLA2) heterotrimer that acts as a potent presynaptic neurotoxin by blocking synaptic transmission and synaptic vesicle recycling. May act by binding in a calcium-dependent fashion to neurotonal pentraxin-1 (NPTX1) and neurotonal pentraxin-2 (NPTX2), but not to neuronal pentraxin receptor (NPTXR). Also binds to taipoxin-associated calcium binding protein 49 (RCN2), a protein localized in the lumen of endoplasmic reticulum. Its function is as follows. Monomer (beta chain): Snake venom phospholipase A2 homolog that is neither toxic nor enzymatically active. Does not bind calcium. This Oxyuranus scutellatus scutellatus (Australian taipan) protein is Neutral phospholipase A2 homolog taipoxin beta chain 1.